The chain runs to 414 residues: Phosphoglycerate kinase (414 aa).

Valine 23, aspartate 24, phenylalanine 25, asparagine 26, arginine 39, serine 62, histidine 63, glycine 65, and arginine 66 together coordinate (2R)-3-phosphoglycerate. Tyrosine 75 bears the Phosphotyrosine mark. Serine 76 bears the Phosphoserine mark. (2R)-3-phosphoglycerate-binding residues include leucine 121 and arginine 122. Residue serine 143 is modified to Phosphoserine. (2R)-3-phosphoglycerate is bound by residues histidine 168 and arginine 169. Phosphoserine is present on residues serine 172, serine 173, and serine 183. Position 211 (glycine 211) interacts with ADP. Residue glycine 211 coordinates CDP. Residues alanine 212 and lysine 213 each coordinate AMP. Alanine 212 provides a ligand contact to ATP. Position 212 (alanine 212) interacts with Mg(2+). 2 residues coordinate Mg(2+): alanine 215 and aspartate 216. Aspartate 216 provides a ligand contact to CDP. Residue lysine 217 coordinates AMP. Lysine 217 is an ATP binding site. Residue glycine 235 participates in ADP binding. Glycine 235 lines the CDP pocket. Residue glycine 236 coordinates AMP. Glycine 236 is an ATP binding site. 2 positions are modified to phosphoserine: serine 253 and serine 260. Position 299 is a phosphothreonine (threonine 299). Position 310 (glycine 310) interacts with AMP. Glycine 310 is an ATP binding site. Phosphoserine is present on serine 328. Positions 335, 337, and 340 each coordinate CDP. ADP is bound at residue phenylalanine 340. Residue glutamate 341 participates in AMP binding. Glutamate 341 serves as a coordination point for ATP. A Phosphoserine modification is found at serine 351. ATP-binding residues include aspartate 372 and threonine 373. Residue aspartate 372 participates in Mg(2+) binding. The residue at position 373 (threonine 373) is a Phosphothreonine. Phosphoserine is present on residues serine 387, serine 390, serine 412, and serine 413.

This sequence belongs to the phosphoglycerate kinase family. As to quaternary structure, monomer. Mg(2+) is required as a cofactor.

The protein resides in the cytoplasm. It is found in the mitochondrion. It carries out the reaction (2R)-3-phosphoglycerate + ATP = (2R)-3-phospho-glyceroyl phosphate + ADP. It functions in the pathway carbohydrate degradation; glycolysis; pyruvate from D-glyceraldehyde 3-phosphate: step 2/5. Functionally, catalyzes one of the two ATP producing reactions in the glycolytic pathway via the reversible conversion of 1,3-diphosphoglycerate to 3-phosphoglycerate. Both L- and D- forms of purine and pyrimidine nucleotides can be used as substrates, but the activity is much lower on pyrimidines. Negatively regulates the biosynthesis of acetyl-CoA from pyruvate in the mitochondrion. The chain is Phosphoglycerate kinase (pgk1) from Schizosaccharomyces pombe (strain 972 / ATCC 24843) (Fission yeast).